A 247-amino-acid chain; its full sequence is uncharacterized protein (247 aa).

Positions 200–225 form a coiled coil; the sequence is SGKYSELKTKVNDIENDLRTLSSNTN.

This is an uncharacterized protein from Acanthamoeba polyphaga (Amoeba).